The primary structure comprises 329 residues: MNNLVVNQTVLPDISKPKWDQGTYAGRAKHFFSSTNPLTLFSSRIQQEKCKEIVTNYKTGVISPTLTVDELWKAKTLYDSTYHPDTGEKMFFLGRMSAQMPGNMVTTGMLLGLYRTLPGVVFSHWFNQSFNAVVNYTNRSGNSKATNERLFVSYCCATSGAMTVALGLNKMVKNSHGLAARLVPFAAIALANAINIPMMRSNEASEGMELKDENDQLVGKSQKMAALSIAQVTLSRIAMAMPYMVMTPIIMNRITRTAYYRTRPWMQKYSEIPIQTLIAGIGLYFTTPLCCALFPQKSSVEVEKLESSVQKEIMSRPNPPKIVYYNKGL.

The next 5 helical transmembrane spans lie at 100–122 (MPGN…GVVF), 150–167 (LFVS…VALG), 178–198 (LAAR…NIPM), 232–254 (VTLS…MNRI), and 274–294 (IQTL…CALF).

It belongs to the sideroflexin family.

The protein localises to the mitochondrion inner membrane. It carries out the reaction L-serine(in) = L-serine(out). It catalyses the reaction L-alanine(in) = L-alanine(out). The catalysed reaction is L-cysteine(in) = L-cysteine(out). Functionally, amino acid transporter importing serine, an essential substrate of the mitochondrial branch of the one-carbon pathway, into mitochondria. Mitochondrial serine is then converted to glycine and formate, which exits to the cytosol where it is used to generate the charged folates that serve as one-carbon donors. May also transport other amino acids including alanine and cysteine. In Caenorhabditis elegans, this protein is Sideroflexin-1.1.